A 465-amino-acid polypeptide reads, in one-letter code: Gamma-aminobutyric acid receptor subunit rho-2 (465 aa).

An N-terminal signal peptide occupies residues 1 to 20 (MPYFTRLILFLFCLMVLVES). Over 21 to 260 (RKPKRKRWTG…LYINFTLRRH (240 aa)) the chain is Extracellular. Arg-105 provides a ligand contact to 4-aminobutanoate. Asn-120 carries N-linked (GlcNAc...) asparagine glycosylation. Ser-169 is a binding site for 4-aminobutanoate. A disulfide bridge connects residues Cys-178 and Cys-192. Glu-197 provides a ligand contact to 4-aminobutanoate. The N-linked (GlcNAc...) asparagine glycan is linked to Asn-254. The helical transmembrane segment at 261-281 (IFFFLLQTYFPATLMVMLSWV) threads the bilayer. The Cytoplasmic portion of the chain corresponds to 282–293 (SFWIDRRAVPAR). A helical transmembrane segment spans residues 294–314 (VSLGITTVLTMTTIITGVNAS). The Extracellular segment spans residues 315-325 (MPRVSYVKAVD). The chain crosses the membrane as a helical span at residues 326–346 (IYLWVSFVFVFLSVLEYAAVN). Topologically, residues 347–443 (YLTTVQERKE…IFQNTHAIDK (97 aa)) are cytoplasmic. A helical membrane pass occupies residues 444 to 464 (YSRLIFPASYIFFNLIYWSVF). Position 465 (Ser-465) is a topological domain, extracellular.

It belongs to the ligand-gated ion channel (TC 1.A.9) family. Gamma-aminobutyric acid receptor (TC 1.A.9.5) subfamily. GABRR2 sub-subfamily. In terms of assembly, three rho subunits (rho-1/GBRR1, rho-2/GBRR2 and rho-3/GBRR3) coassemble either to form functional homopentamers or heteropentamers. Rho-2 is unable to form a functional homopentamer. Interacts with SQSTM1.

It localises to the postsynaptic cell membrane. It is found in the cell membrane. The enzyme catalyses chloride(in) = chloride(out). Functionally, rho subunit of the pentameric ligand-gated chloride channels responsible for mediating the effects of gamma-aminobutyric acid (GABA), the major inhibitory neurotransmitter in the brain. Rho-containing GABA-gated chloride channels are a subclass of GABA(A) receptors (GABAARs) entirely composed of rho subunits, where GABA molecules bind at the rho intersubunit interfaces. When activated by GABA, rho-GABAARs selectively allow the flow of chloride anions across the cell membrane down their electrochemical gradient. Rho-2 GABAARs may contribute to the regulation of glial development in the cerebellum by controlling extrasynaptic transmission. Rho-2 GABAARs are also involved in neuronal tonic (extrasynaptic) and phasic (synaptic) transmission in the Purkinje neurons of the cerebellum. Rho-2 GABAARs expressed in retina may play a role in retinal neurotransmission. This is Gamma-aminobutyric acid receptor subunit rho-2 from Homo sapiens (Human).